A 707-amino-acid polypeptide reads, in one-letter code: E3 ubiquitin-protein ligase Praja-2 (707 aa).

Residues 1–10 (MSQYTEKEPS) are compositionally biased toward basic and acidic residues. 3 disordered regions span residues 1–23 (MSQYTEKEPSVMDQDSSKAAWPR), 75–120 (NTAG…PSVA), and 242–290 (AGDA…CVPG). Position 2 is an N-acetylserine (serine 2). The span at 109–119 (LNQSTESNPSV) shows a compositional bias: polar residues. The span at 246-276 (EAVHQDGQEFQRSSEDGIVRKRRQDDTDQGR) shows a compositional bias: basic and acidic residues. Phosphoserine occurs at positions 306 and 320. Residue serine 339 is modified to Phosphoserine; by PKA. Disordered regions lie at residues 380–403 (VTPREAERHRATAENGATASGRQE) and 424–493 (EDSS…QTSL). Positions 381 to 391 (TPREAERHRAT) are enriched in basic and acidic residues. The residue at position 430 (serine 430) is a Phosphoserine. A compositionally biased stretch (acidic residues) spans 465 to 481 (NEPELQSDSSGPEEENQ). Residues 482–491 (ELSLQEGEQT) show a composition bias toward polar residues. Residues 530 to 707 (DGNNNLEDDS…PANDNAEEAP (178 aa)) are interaction with PRKAR1A, PRKAR2A and PRKAR2B. Positions 549 to 569 (WSLFDGFADGLGVAEAISYVD) are mediates interaction with TBC1D31. The segment at 633-674 (CPICCSEYIKDDIATELPCHHFFHKPCVSIWLQKSGTCPVCR) adopts an RING-type; atypical zinc-finger fold. Residues 686–707 (AAASSEPDLDASPANDNAEEAP) form a disordered region.

In terms of assembly, binds ubiquitin-conjugating enzymes (E2s). In vitro, interacts with the ubiquitin-conjugating enzyme, UBE2D2. The phosphorylated form interacts with PRKAR1A, PRKAR2A and PRKAR2B. Binds the catalytic subunits of cAMP-dependent protein kinase. Interacts with MFHAS1. Interacts with TBC1D31; the interaction is direct and recruits PJA2 to centrosomes. In terms of tissue distribution, highly expressed in the brain, in nerve cells but not in glial cells. Abundantly expressed in pyramidal neurons and in the CA3 region of apical dendrites. Colocalizes with PRKAR2B in dentate granule cells and at postsynaptic sites of primary hippocampal neurons.

The protein resides in the cytoplasm. It localises to the cell membrane. Its subcellular location is the endoplasmic reticulum membrane. It is found in the golgi apparatus membrane. The protein localises to the synapse. The protein resides in the postsynaptic density. It localises to the cytoskeleton. Its subcellular location is the microtubule organizing center. It is found in the centrosome. The catalysed reaction is S-ubiquitinyl-[E2 ubiquitin-conjugating enzyme]-L-cysteine + [acceptor protein]-L-lysine = [E2 ubiquitin-conjugating enzyme]-L-cysteine + N(6)-ubiquitinyl-[acceptor protein]-L-lysine.. It functions in the pathway protein modification; protein ubiquitination. In terms of biological role, has E2-dependent E3 ubiquitin-protein ligase activity. Responsible for ubiquitination of cAMP-dependent protein kinase type I and type II-alpha/beta regulatory subunits and for targeting them for proteasomal degradation. Essential for PKA-mediated long-term memory processes. Through the ubiquitination of MFHAS1, positively regulates the TLR2 signaling pathway that leads to the activation of the downstream p38 and JNK MAP kinases and promotes the polarization of macrophages toward the pro-inflammatory M1 phenotype. Plays a role in ciliogenesis by ubiquitinating OFD1. This Rattus norvegicus (Rat) protein is E3 ubiquitin-protein ligase Praja-2 (Pja2).